Here is a 679-residue protein sequence, read N- to C-terminus: Probable metal-nicotianamine transporter YSL18 (679 aa).

The span at 1 to 17 shows a compositional bias: basic and acidic residues; it reads MESVGDPRDGPSTERAF. The segment at 1-21 is disordered; that stretch reads MESVGDPRDGPSTERAFEGQP. Transmembrane regions (helical) follow at residues 29–49, 51–71, 101–121, 144–164, 211–231, 255–275, 309–329, 379–399, 407–427, 441–461, 497–517, 547–567, 593–613, and 627–647; these read VTLR…SVMM, LVFT…LGFF, CVVA…LLAM, FGRM…AIVP, LASL…NCGF, VGIG…GSII, VFCA…AISL, FAIS…PLMY, VAAA…GTGV, ILMF…SLVI, VIGT…FHHF, LPKY…AVCA, FLLV…VFLW, and VLAS…ALLA.

This sequence belongs to the YSL (TC 2.A.67.2) family.

The protein localises to the membrane. In terms of biological role, may be involved in the transport of nicotianamine-chelated metals. The chain is Probable metal-nicotianamine transporter YSL18 (YSL18) from Oryza sativa subsp. japonica (Rice).